Reading from the N-terminus, the 449-residue chain is Xylose isomerase (449 aa).

Residues H103 and D106 contribute to the active site. 7 residues coordinate Mg(2+): E234, E270, H273, D298, D309, D311, and D342.

The protein belongs to the xylose isomerase family. In terms of assembly, homotetramer. The cofactor is Mg(2+).

It is found in the cytoplasm. The catalysed reaction is alpha-D-xylose = alpha-D-xylulofuranose. This is Xylose isomerase from Levilactobacillus brevis (Lactobacillus brevis).